The primary structure comprises 159 residues: 3-hydroxyacyl-[acyl-carrier-protein] dehydratase FabZ (159 aa).

Residue His-59 is part of the active site.

Belongs to the thioester dehydratase family. FabZ subfamily.

The protein localises to the cytoplasm. The catalysed reaction is a (3R)-hydroxyacyl-[ACP] = a (2E)-enoyl-[ACP] + H2O. Involved in unsaturated fatty acids biosynthesis. Catalyzes the dehydration of short chain beta-hydroxyacyl-ACPs and long chain saturated and unsaturated beta-hydroxyacyl-ACPs. The protein is 3-hydroxyacyl-[acyl-carrier-protein] dehydratase FabZ of Caulobacter vibrioides (strain ATCC 19089 / CIP 103742 / CB 15) (Caulobacter crescentus).